The chain runs to 137 residues: Large ribosomal subunit protein uL16 (137 aa).

Belongs to the universal ribosomal protein uL16 family. In terms of assembly, part of the 50S ribosomal subunit.

Its function is as follows. Binds 23S rRNA and is also seen to make contacts with the A and possibly P site tRNAs. In Rhodopseudomonas palustris (strain BisB18), this protein is Large ribosomal subunit protein uL16.